The sequence spans 233 residues: uncharacterized protein (233 aa).

The protein belongs to the asfivirus H233R family.

This is an uncharacterized protein from African swine fever virus (strain Badajoz 1971 Vero-adapted) (Ba71V).